We begin with the raw amino-acid sequence, 716 residues long: Probable calcium-binding mitochondrial carrier K02F3.2 (716 aa).

The N-terminal domain stretch occupies residues 1 to 345 (MSFDHLLTSS…CLKDIQAIDP (345 aa)). EF-hand domains are found at residues 93 to 121 (YNKE…FCAF), 127 to 162 (SPDA…TQPL), 165 to 195 (QDFD…CQLL), and 198 to 233 (FYEE…VKGH). D106, T108, D110, E117, D140, N142, S144, T146, and E151 together coordinate Ca(2+). D211, N213, N215, T217, and D222 together coordinate Ca(2+). The linker loop domain stretch occupies residues 346-362 (ERLKRVSQMDRLINIKA). The segment at 372–664 (GTAFLESAYR…RLFYVDFAGS (293 aa)) is carrier domain. Solcar repeat units lie at residues 376–468 (LESA…MRDK), 475–560 (IPLY…AKLA), and 568–656 (NSPG…LQRL). The next 6 membrane-spanning stretches (helical) occupy residues 382–399 (FLLG…VYPI), 443–462 (GLLP…LTMN), 485–498 (GTGG…TNPL), 535–554 (GSRA…FPAY), 574–591 (FASA…VTPA), and 631–650 (GTAA…LLTY). Residues 665–716 (RPTGSELATTKTIQDESSTNPDHVGGYKLAAATFSGIEHKFGLFLPKFETSK) form a C-terminal domain region.

The protein belongs to the mitochondrial carrier (TC 2.A.29) family. In terms of assembly, homodimer (via N-terminus).

The protein resides in the mitochondrion inner membrane. Its function is as follows. Mitochondrial and calcium-binding carrier that catalyzes the calcium-dependent exchange of cytoplasmic glutamate with mitochondrial aspartate across the mitochondrial inner membrane. The protein is Probable calcium-binding mitochondrial carrier K02F3.2 of Caenorhabditis elegans.